The chain runs to 500 residues: Cytochrome P450 71D13 (500 aa).

Residues 3–23 (LQISSAIIILVVTYTISLLII) form a helical; Signal-anchor for type II membrane protein membrane-spanning segment. Residue cysteine 439 coordinates heme.

The protein belongs to the cytochrome P450 family. Heme is required as a cofactor.

It is found in the endoplasmic reticulum membrane. The catalysed reaction is (4S)-limonene + reduced [NADPH--hemoprotein reductase] + O2 = (1S,6R)-isopiperitenol + oxidized [NADPH--hemoprotein reductase] + H2O + H(+). Hydroxylates (-)-(4S)-limonene to (-)-trans-isopiperitenol, a precursor of (-)-menthol, responsible for the cooling sensation of peppermint. The protein is Cytochrome P450 71D13 (CYP71D13) of Mentha piperita (Peppermint).